The sequence spans 371 residues: Regulatory protein RapK (371 aa).

6 TPR repeats span residues Glu-7–Met-42, Glu-93–Glu-130, Ala-175–Thr-208, Ala-215–Leu-248, Ile-254–Lys-290, and Asp-331–Met-364.

This sequence belongs to the Rap family.

The protein localises to the cytoplasm. With respect to regulation, inhibited by PhrK, which prevents RapK-ComA interaction. Functionally, involved in the regulation of genetic competence development. Inhibits the activity of ComA, a transcriptional factor that regulates the development of genetic competence. Likely affects the activity of additional regulators, in particular Spo0A. This chain is Regulatory protein RapK (rapK), found in Bacillus subtilis (strain 168).